The primary structure comprises 176 residues: Nucleoside triphosphate/diphosphate phosphatase (176 aa).

The Proton donor role is filled by Arg-23. Residues Asn-87, Asp-103, Asp-105, Asp-107, Asp-120, and Glu-123 each coordinate Mg(2+).

The protein belongs to the Ntdp family. The cofactor is Mg(2+).

It carries out the reaction a ribonucleoside 5'-triphosphate + H2O = a ribonucleoside 5'-diphosphate + phosphate + H(+). The enzyme catalyses a ribonucleoside 5'-diphosphate + H2O = a ribonucleoside 5'-phosphate + phosphate + H(+). Functionally, has nucleoside phosphatase activity towards nucleoside triphosphates and nucleoside diphosphates. The chain is Nucleoside triphosphate/diphosphate phosphatase from Bacillus anthracis (strain A0248).